We begin with the raw amino-acid sequence, 207 residues long: Uracil phosphoribosyltransferase (207 aa).

5-phospho-alpha-D-ribose 1-diphosphate-binding positions include Arg-77, Arg-102, and 129–137 (DPMLATGGS). Uracil-binding positions include Ile-192 and 197-199 (GDA). 5-phospho-alpha-D-ribose 1-diphosphate is bound at residue Asp-198.

The protein belongs to the UPRTase family. It depends on Mg(2+) as a cofactor.

The enzyme catalyses UMP + diphosphate = 5-phospho-alpha-D-ribose 1-diphosphate + uracil. The protein operates within pyrimidine metabolism; UMP biosynthesis via salvage pathway; UMP from uracil: step 1/1. With respect to regulation, allosterically activated by GTP. Catalyzes the conversion of uracil and 5-phospho-alpha-D-ribose 1-diphosphate (PRPP) to UMP and diphosphate. The chain is Uracil phosphoribosyltransferase from Dictyoglomus thermophilum (strain ATCC 35947 / DSM 3960 / H-6-12).